We begin with the raw amino-acid sequence, 816 residues long: Endo-acting ulvan lyase (816 aa).

A signal peptide spans 1–23; it reads MGTSVRRISVVLMMLFGTNFCWS.

This sequence belongs to the polysaccharide lyase family.

It localises to the cell surface. Its subcellular location is the periplasm. Functionally, ulvan lyase involved in ulvan degradation. Ulvan is the main polysaccharide component of the Ulvales (green seaweed) cell wall. It is composed of disaccharide building blocks comprising 3-sulfated rhamnose (Rha3S) linked to D-glucuronic acid (GlcA), L-iduronic acid (IduA), or D-xylose (Xyl). Ulvan lyase catalyzes the endolytic cleavage of the glycosidic bond between Rha3S and the uronic acids GlcA or IduA, producing oligosaccharides that have unsaturated 4-deoxy-L-threo-hex-4-enopyranosiduronic acid (deltaUA) at the non-reducing end. This results eventually in the degradation of the ulvan polysaccharide into deltaUA-Rha3S disaccharides and deltaUA-Rha3S-Xyl-Rha3S tetrasaccharides. In Formosa agariphila (strain DSM 15362 / KCTC 12365 / LMG 23005 / KMM 3901 / M-2Alg 35-1), this protein is Endo-acting ulvan lyase.